We begin with the raw amino-acid sequence, 195 residues long: Probable septum site-determining protein MinC (195 aa).

Belongs to the MinC family. Interacts with MinD and FtsZ.

In terms of biological role, cell division inhibitor that blocks the formation of polar Z ring septums. Rapidly oscillates between the poles of the cell to destabilize FtsZ filaments that have formed before they mature into polar Z rings. Prevents FtsZ polymerization. The polypeptide is Probable septum site-determining protein MinC (Helicobacter pylori (strain P12)).